Consider the following 157-residue polypeptide: SsrA-binding protein (157 aa).

Residues 133-157 (LHDKRESEKKRDWGREKGRLLRARG) form a disordered region. Basic and acidic residues predominate over residues 135–151 (DKRESEKKRDWGREKGR).

This sequence belongs to the SmpB family.

It is found in the cytoplasm. Required for rescue of stalled ribosomes mediated by trans-translation. Binds to transfer-messenger RNA (tmRNA), required for stable association of tmRNA with ribosomes. tmRNA and SmpB together mimic tRNA shape, replacing the anticodon stem-loop with SmpB. tmRNA is encoded by the ssrA gene; the 2 termini fold to resemble tRNA(Ala) and it encodes a 'tag peptide', a short internal open reading frame. During trans-translation Ala-aminoacylated tmRNA acts like a tRNA, entering the A-site of stalled ribosomes, displacing the stalled mRNA. The ribosome then switches to translate the ORF on the tmRNA; the nascent peptide is terminated with the 'tag peptide' encoded by the tmRNA and targeted for degradation. The ribosome is freed to recommence translation, which seems to be the essential function of trans-translation. The polypeptide is SsrA-binding protein (Bradyrhizobium sp. (strain ORS 278)).